The following is a 154-amino-acid chain: Small ribosomal subunit protein uS11c (154 aa).

Belongs to the universal ribosomal protein uS11 family. In terms of assembly, part of the 30S ribosomal subunit.

The protein resides in the plastid. The protein is Small ribosomal subunit protein uS11c of Helicosporidium sp. subsp. Simulium jonesii (Green alga).